A 116-amino-acid polypeptide reads, in one-letter code: Ribosome-binding factor A (116 aa).

Belongs to the RbfA family. In terms of assembly, monomer. Binds 30S ribosomal subunits, but not 50S ribosomal subunits or 70S ribosomes.

It localises to the cytoplasm. Functionally, one of several proteins that assist in the late maturation steps of the functional core of the 30S ribosomal subunit. Associates with free 30S ribosomal subunits (but not with 30S subunits that are part of 70S ribosomes or polysomes). Required for efficient processing of 16S rRNA. May interact with the 5'-terminal helix region of 16S rRNA. This Streptococcus pneumoniae (strain Hungary19A-6) protein is Ribosome-binding factor A.